Reading from the N-terminus, the 310-residue chain is Methionyl-tRNA formyltransferase (310 aa).

114-117 contributes to the (6S)-5,6,7,8-tetrahydrofolate binding site; sequence SLLP.

This sequence belongs to the Fmt family.

The enzyme catalyses L-methionyl-tRNA(fMet) + (6R)-10-formyltetrahydrofolate = N-formyl-L-methionyl-tRNA(fMet) + (6S)-5,6,7,8-tetrahydrofolate + H(+). Its function is as follows. Attaches a formyl group to the free amino group of methionyl-tRNA(fMet). The formyl group appears to play a dual role in the initiator identity of N-formylmethionyl-tRNA by promoting its recognition by IF2 and preventing the misappropriation of this tRNA by the elongation apparatus. This chain is Methionyl-tRNA formyltransferase, found in Granulibacter bethesdensis (strain ATCC BAA-1260 / CGDNIH1).